The primary structure comprises 311 residues: Olfactory receptor 5L2 (311 aa).

The Extracellular segment spans residues 1–25 (MGKENCTTVAEFILLGLSDVPELRV). A glycan (N-linked (GlcNAc...) asparagine) is linked at N5. The chain crosses the membrane as a helical span at residues 26-46 (CLFLLFLLIYGVTLLANLGMT). Residues 47–54 (ALIQVSSR) lie on the Cytoplasmic side of the membrane. A helical membrane pass occupies residues 55–75 (LHTPVYFFLSHLSFVDFCYSS). Over 76–99 (IIVPKMLANIFNKDKAISFLGCMV) the chain is Extracellular. C97 and C189 form a disulfide bridge. Residues 100-120 (QFYLFCTCGVTEVFLLAVMAY) traverse the membrane as a helical segment. The Cytoplasmic portion of the chain corresponds to 121-139 (DRFVAICNPLLYMVTMSQK). A helical transmembrane segment spans residues 140–160 (LRVELTSCCYFCGTVCSLIHS). Over 161–196 (SLALRILFYRSNVINHFFCDLPPLLSLACSDVTVNE) the chain is Extracellular. An N-linked (GlcNAc...) asparagine glycan is attached at N195. A helical membrane pass occupies residues 197–217 (TLLFLVATLNESVTIMIILTS). Residues 218 to 237 (YLLILTTILKIHSAESRHKA) are Cytoplasmic-facing. The chain crosses the membrane as a helical span at residues 238–258 (FSTCASHLTAITVSHGTILYI). The Extracellular portion of the chain corresponds to 259 to 271 (YCRPSSGNSGDVD). Residues 272–292 (KVATVFYTVVIPMLNPLIYSL) traverse the membrane as a helical segment. Topologically, residues 293–311 (RNKDVNKALRKVMGSKIHS) are cytoplasmic.

Belongs to the G-protein coupled receptor 1 family.

The protein localises to the cell membrane. Odorant receptor. The sequence is that of Olfactory receptor 5L2 (OR5L2) from Homo sapiens (Human).